The chain runs to 662 residues: Hypoxia-inducible factor 3-alpha (662 aa).

Residues methionine 1–arginine 25 are disordered. The 54-residue stretch at leucine 12–histidine 65 folds into the bHLH domain. The nuclear localization signal (isoform 2) stretch occupies residues glutamine 75 to leucine 98. PAS domains are found at residues glycine 80–serine 150 and proline 225–glycine 295. The nuclear export signal (isoform 2) stretch occupies residues alanine 228–alanine 272. Disordered stretches follow at residues glutamate 352–valine 377 and proline 416–aspartate 446. An LRRLL motif is present at residues methionine 414–leucine 418. A compositionally biased stretch (low complexity) spans threonine 426–glutamine 437. The segment at leucine 448–glutamate 581 is ODD. The tract at residues valine 450–glutamate 501 is NTAD. A Glycyl lysine isopeptide (Lys-Gly) (interchain with G-Cter in ubiquitin) cross-link involves residue lysine 463. The short motif at leucine 485–aspartate 492 is the LAPYISMD element. Proline 487 is subject to 4-hydroxyproline. Residues serine 500–serine 595 form a disordered region. Positions lysine 505–serine 521 are enriched in basic residues. Residue lysine 565 forms a Glycyl lysine isopeptide (Lys-Gly) (interchain with G-Cter in ubiquitin) linkage. The span at serine 572–proline 584 shows a compositional bias: basic and acidic residues.

Isoform 1 interacts with ARNT. Isoform 2 interacts with HIF1A. Isoform 2 interacts EPAS1. Isoform 2 interacts (via C-terminus domain) with BAD; the interaction reduces the binding between BAD and BAX. Isoform 2 (via C-terminus domain) interacts with BCL2L2 and MCL1. Interacts with VHL. Post-translationally, in normoxia, hydroxylated on Pro-487 in the oxygen-dependent degradation domain (ODD) by PHD. The hydroxylated proline promotes interaction with VHL, initiating rapid ubiquitination and subsequent proteasomal degradation. Ubiquitinated; ubiquitination occurs in a VHL- and oxygen-dependent pathway and subsequently targeted for proteasomal degradation. Isoform 3 is expressed in endothelial cells of vessels and capillaries in alveoli of the neonatal lung (at protein level). Expressed in lung, brain, heart and kidney. Isoform 2 is expressed in heart and lung. Isoform 2 is highly expressed in the epithelial cell layer of the cornea with lower expression in the layers of ganglion cells, inner nuclear cells, and rods and cones of the retina. Isoform 2 is expressed in the cerebellum only in the Purkinje cell layer.

Its subcellular location is the nucleus. It localises to the cytoplasm. The protein localises to the nucleus speckle. The protein resides in the mitochondrion. In terms of biological role, acts as a transcriptional regulator in adaptive response to low oxygen tension. Acts as a regulator of hypoxia-inducible gene expression. Plays a role in the development of the cardiorespiratory system. Functionally, acts as a positive regulator of hypoxia-inducible gene expression. Associates to core DNA sequence 5'-TACGTG-3' within the hypoxia response element (HRE) of target gene promoters in a ARNT-dependent manner, and hence also participates in the transcriptional activation of reporter genes driven by HRE. Attenuates the ability of transcription factor HIF1A, EPAS1 and the HIF1A-ARNT complex to bind to hypoxia-responsive elements (HRE) located within the enhancer/promoter of hypoxia-inducible target genes and hence inhibits HRE-driven transcriptional activation. Functions as an inhibitor of angiogenesis in hypoxic cells of the cornea. May act as a tumor suppressor. May also be involved in apoptosis. Its function is as follows. Attenuates the ability of transcription factor HIF1A, EPAS1 and the HIF1A-ARNT complex to bind to hypoxia-responsive elements (HRE) located within the enhancer/promoter of hypoxia-inducible target genes and hence inhibits HRE-driven transcriptional activation. Also plays a role in the development of the lung and heart during embryonic and neonatal stages. This is Hypoxia-inducible factor 3-alpha from Mus musculus (Mouse).